We begin with the raw amino-acid sequence, 357 residues long: Protein Wnt-5b (357 aa).

The signal sequence occupies residues 1–18 (MPGIRLLLAAALLCCPPP). A disulfide bridge connects residues Cys81 and Cys92. Residues Asn91 and Asn97 are each glycosylated (N-linked (GlcNAc...) asparagine). 10 disulfides stabilise this stretch: Cys131–Cys139, Cys141–Cys159, Cys215–Cys229, Cys217–Cys224, Cys286–Cys317, Cys302–Cys312, Cys316–Cys356, Cys332–Cys347, Cys334–Cys344, and Cys339–Cys340. The O-palmitoleoyl serine; by PORCN moiety is linked to residue Ser221. Residues Asn289 and Asn303 are each glycosylated (N-linked (GlcNAc...) asparagine).

The protein belongs to the Wnt family. Post-translationally, palmitoleoylation is required for efficient binding to frizzled receptors. Depalmitoleoylation leads to Wnt signaling pathway inhibition. As to expression, predominantly in neuroectodermal tissues.

It localises to the secreted. The protein localises to the extracellular space. Its subcellular location is the extracellular matrix. Its function is as follows. Ligand for members of the frizzled family of seven transmembrane receptors. Probable developmental protein. May be a signaling molecule which affects the development of discrete regions of tissues. Is likely to signal over only few cell diameters. The sequence is that of Protein Wnt-5b (WNT-5B) from Ambystoma mexicanum (Axolotl).